The primary structure comprises 265 residues: Sulfur carrier protein FdhD (265 aa).

The active-site Cysteine persulfide intermediate is the cysteine 107.

Belongs to the FdhD family.

It is found in the cytoplasm. Functionally, required for formate dehydrogenase (FDH) activity. Acts as a sulfur carrier protein that transfers sulfur from IscS to the molybdenum cofactor prior to its insertion into FDH. The chain is Sulfur carrier protein FdhD from Staphylococcus aureus (strain bovine RF122 / ET3-1).